Here is a 346-residue protein sequence, read N- to C-terminus: Peroxidase 9 (346 aa).

The N-terminal stretch at 1 to 23 (MAISKLIPTLVLFVLFSFDVSVA) is a signal peptide. Disulfide bonds link Cys-54–Cys-134, Cys-87–Cys-92, Cys-140–Cys-342, and Cys-219–Cys-251. The Proton acceptor role is filled by His-85. Ca(2+) contacts are provided by Asp-86, Val-89, Gly-91, Asp-93, and Ser-95. Residue Pro-182 coordinates substrate. N-linked (GlcNAc...) asparagine glycosylation occurs at Asn-185. His-212 contributes to the heme b binding site. Thr-213 contributes to the Ca(2+) binding site. Asp-264, Ser-267, and Asp-272 together coordinate Ca(2+).

This sequence belongs to the peroxidase family. Classical plant (class III) peroxidase subfamily. It depends on heme b as a cofactor. Ca(2+) serves as cofactor.

Its subcellular location is the secreted. It carries out the reaction 2 a phenolic donor + H2O2 = 2 a phenolic radical donor + 2 H2O. In terms of biological role, removal of H(2)O(2), oxidation of toxic reductants, biosynthesis and degradation of lignin, suberization, auxin catabolism, response to environmental stresses such as wounding, pathogen attack and oxidative stress. These functions might be dependent on each isozyme/isoform in each plant tissue. This Arabidopsis thaliana (Mouse-ear cress) protein is Peroxidase 9 (PER9).